The sequence spans 221 residues: Transcriptional regulatory protein QseB (221 aa).

Positions 2 to 116 (RILLIEDDNL…EVAARLQALI (115 aa)) constitute a Response regulatory domain. Residue aspartate 51 is modified to 4-aspartylphosphate. The ompR/PhoB-type DNA-binding region spans 124-218 (HSVIEQAGVK…VHGVGYALGQ (95 aa)).

Post-translationally, phosphorylated by QseC.

It localises to the cytoplasm. Its function is as follows. Member of a two-component regulatory system QseB/QseC. The chain is Transcriptional regulatory protein QseB (qseB) from Haemophilus influenzae (strain ATCC 51907 / DSM 11121 / KW20 / Rd).